Consider the following 291-residue polypeptide: Phytanoyl-CoA dioxygenase domain-containing protein 1 (291 aa).

2-oxoglutarate contacts are provided by residues Lys102, Met141, 156–158 (HQD), and Trp174. Positions 156 and 158 each coordinate Fe cation. His246 lines the Fe cation pocket. Residues Ser248 and Arg257 each contribute to the 2-oxoglutarate site.

Belongs to the PhyH family. PHYHD1 subfamily. Requires Fe cation as cofactor.

Its function is as follows. 2-oxoglutarate(2OG)-dependent dioxygenase that catalyzes the conversion of 2-oxoglutarate to succinate and CO(2) in an iron-dependent manner. However, does not couple 2OG turnover to the hydroxylation of acyl-coenzyme A derivatives, implying that it is not directly involved in phytanoyl coenzyme-A metabolism. Does not show detectable activity towards fatty acid CoA thioesters. In Danio rerio (Zebrafish), this protein is Phytanoyl-CoA dioxygenase domain-containing protein 1 (phyhd1).